A 341-amino-acid chain; its full sequence is MEQDNKEQAMHQPPMDNKMLVPVSNVPVSSGNSGFHQPPATQYLPEMMRSYMASAEELRCNEREWESQLIRSLPEHGVRCPSQLAPIPFQNYCQRSIGRGSHVMPVGSSGTLGVTISFSENLMPQGGLPSSRGVSVMAHSSAPAMPYPMPPTVPATTGSLKHGILLVPGMASAGTHAVAPFMDQMLHSINPCNPEMLPARFQQLLPLDSQDSLVTESNTQEEPFVREPPTPAPEGAESPSTSRGATRRQSPVSRPYVCTYNSCGKSYTKRSHLVSHQRKHTGVKPFACDWNGCTWKFFRSDELGRHKRIHTRYRPHKCDECDREFMRSDHLRQHKRTHLPK.

Positions 214–252 are disordered; that stretch reads VTESNTQEEPFVREPPTPAPEGAESPSTSRGATRRQSPV. Over residues 238 to 252 the composition is skewed to polar residues; it reads SPSTSRGATRRQSPV. 3 consecutive C2H2-type zinc fingers follow at residues 256 to 280, 286 to 310, and 316 to 338; these read YVCT…QRKH, FACD…KRIH, and HKCD…KRTH.

Belongs to the Sp1 C2H2-type zinc-finger protein family. Exclusively expressed in testis and ovary. Localized to step 3-8 spermatids in testis and growing oocytes in ovary.

The protein resides in the nucleus. Its function is as follows. Transcription repressor that binds to the promoter of target genes and prevents their expression. Acts as a negative regulator of epithelial-mesenchymal transition and metastasis in breast cancer. Specifically binds the 5'-CACCC-3' sequence in the promoter of ID1, a key metastasis regulator in breast cancer, and repress its expression. May be a germ cell-specific transcription factor that plays important roles in spermatid differentiation and oocyte development. This Mus musculus (Mouse) protein is Krueppel-like factor 17 (Klf17).